The sequence spans 173 residues: Photosystem I assembly protein Ycf3 (173 aa).

TPR repeat units follow at residues 35 to 68 (AFAY…EEDP), 72 to 105 (AFIL…NAKM), and 120 to 153 (GSIA…APNN).

Belongs to the Ycf3 family.

The protein resides in the cellular thylakoid membrane. Its function is as follows. Essential for the assembly of the photosystem I (PSI) complex. May act as a chaperone-like factor to guide the assembly of the PSI subunits. The polypeptide is Photosystem I assembly protein Ycf3 (Synechococcus sp. (strain RCC307)).